A 465-amino-acid chain; its full sequence is Lactaldehyde dehydrogenase (465 aa).

Position 220-225 (220-225) interacts with NAD(+); the sequence is GSVEVG. Residues Glu-240 and Cys-274 contribute to the active site.

Belongs to the aldehyde dehydrogenase family. Homotetramer.

The enzyme catalyses (S)-lactaldehyde + NAD(+) + H2O = (S)-lactate + NADH + 2 H(+). It participates in cofactor biosynthesis; coenzyme F420 biosynthesis. Its function is as follows. Involved in F420 biosynthesis through the oxidation of lactaldehyde to lactate. This is Lactaldehyde dehydrogenase from Methanococcus maripaludis (strain DSM 14266 / JCM 13030 / NBRC 101832 / S2 / LL).